The sequence spans 513 residues: Maturase K (513 aa).

This sequence belongs to the intron maturase 2 family. MatK subfamily.

The protein resides in the plastid. The protein localises to the chloroplast. Usually encoded in the trnK tRNA gene intron. Probably assists in splicing its own and other chloroplast group II introns. The chain is Maturase K from Typha angustifolia (Narrow leaf cattail).